Reading from the N-terminus, the 600-residue chain is Probable pectin methyltransferase QUA3 (600 aa).

At 1 to 18 (MGHVNLPASKRGNPRQWR) the chain is on the cytoplasmic side. The helical; Signal-anchor for type II membrane protein transmembrane segment at 19–39 (LLDIVTAAFFGIVLLFFILLF) threads the bilayer. Residues 40–600 (TPLGDSMAAS…SLWKLPSNSH (561 aa)) are Lumenal-facing. N-linked (GlcNAc...) asparagine glycosylation is present at N283.

The protein belongs to the methyltransferase superfamily. Highly expressed and abundant in suspension-cultured cells, but low levels in seedlings.

Its subcellular location is the golgi apparatus membrane. It participates in glycan metabolism; pectin biosynthesis. In terms of biological role, S-adenosyl-L-methionine (SAM)-dependent methyltransferase (MTase) which mediates the methylesterification of the pectin homogalacturonan (HG) and thus regulates cell wall biosynthesis, at least in suspension-cultured cells. The chain is Probable pectin methyltransferase QUA3 from Arabidopsis thaliana (Mouse-ear cress).